Consider the following 63-residue polypeptide: Sperm protamine P1 (63 aa).

Residues 1 to 63 (MARYRRHSRS…RYSRRGRRRY (63 aa)) are disordered.

Belongs to the protamine P1 family. Testis.

Its subcellular location is the nucleus. It localises to the chromosome. Its function is as follows. Protamines substitute for histones in the chromatin of sperm during the haploid phase of spermatogenesis. They compact sperm DNA into a highly condensed, stable and inactive complex. This Sminthopsis griseoventer (Gray-bellied dunnart) protein is Sperm protamine P1 (PRM1).